Reading from the N-terminus, the 523-residue chain is ATP synthase subunit beta, mitochondrial (523 aa).

The N-terminal 19 residues, 1–19 (MFSRVAKTSFSAVRAAKSQ), are a transit peptide targeting the mitochondrion. Residue 201–208 (GGAGVGKT) coordinates ATP.

Belongs to the ATPase alpha/beta chains family. In terms of assembly, F-type ATPases have 2 components, CF(1) - the catalytic core - and CF(0) - the membrane proton channel. CF(1) has five subunits: alpha(3), beta(3), gamma(1), delta(1), epsilon(1). CF(0) has three main subunits: a, b and c.

It localises to the mitochondrion. The protein localises to the mitochondrion inner membrane. It catalyses the reaction ATP + H2O + 4 H(+)(in) = ADP + phosphate + 5 H(+)(out). Its function is as follows. Mitochondrial membrane ATP synthase (F(1)F(0) ATP synthase or Complex V) produces ATP from ADP in the presence of a proton gradient across the membrane which is generated by electron transport complexes of the respiratory chain. F-type ATPases consist of two structural domains, F(1) - containing the extramembraneous catalytic core, and F(0) - containing the membrane proton channel, linked together by a central stalk and a peripheral stalk. During catalysis, ATP synthesis in the catalytic domain of F(1) is coupled via a rotary mechanism of the central stalk subunits to proton translocation. Subunits alpha and beta form the catalytic core in F(1). Rotation of the central stalk against the surrounding alpha(3)beta(3) subunits leads to hydrolysis of ATP in three separate catalytic sites on the beta subunits. The sequence is that of ATP synthase subunit beta, mitochondrial from Hemicentrotus pulcherrimus (Sea urchin).